Here is a 461-residue protein sequence, read N- to C-terminus: Bifunctional protein HldE (461 aa).

Positions 1-315 are ribokinase; that stretch reads MKKILVIGDL…LILNQTHPKI (315 aa). An ATP-binding site is contributed by 191–194; the sequence is NRTE. Asp-260 is a catalytic residue. A cytidylyltransferase region spans residues 332–461; it reads FTNGCFDLLH…IEKIKRTCND (130 aa).

This sequence in the N-terminal section; belongs to the carbohydrate kinase PfkB family. It in the C-terminal section; belongs to the cytidylyltransferase family. In terms of assembly, homodimer.

It catalyses the reaction D-glycero-beta-D-manno-heptose 7-phosphate + ATP = D-glycero-beta-D-manno-heptose 1,7-bisphosphate + ADP + H(+). The catalysed reaction is D-glycero-beta-D-manno-heptose 1-phosphate + ATP + H(+) = ADP-D-glycero-beta-D-manno-heptose + diphosphate. It functions in the pathway nucleotide-sugar biosynthesis; ADP-L-glycero-beta-D-manno-heptose biosynthesis; ADP-L-glycero-beta-D-manno-heptose from D-glycero-beta-D-manno-heptose 7-phosphate: step 1/4. Its pathway is nucleotide-sugar biosynthesis; ADP-L-glycero-beta-D-manno-heptose biosynthesis; ADP-L-glycero-beta-D-manno-heptose from D-glycero-beta-D-manno-heptose 7-phosphate: step 3/4. It participates in bacterial outer membrane biogenesis; LPS core biosynthesis. Functionally, catalyzes the phosphorylation of D-glycero-D-manno-heptose 7-phosphate at the C-1 position to selectively form D-glycero-beta-D-manno-heptose-1,7-bisphosphate. In terms of biological role, catalyzes the ADP transfer from ATP to D-glycero-beta-D-manno-heptose 1-phosphate, yielding ADP-D-glycero-beta-D-manno-heptose. The polypeptide is Bifunctional protein HldE (Helicobacter pylori (strain ATCC 700392 / 26695) (Campylobacter pylori)).